A 223-amino-acid polypeptide reads, in one-letter code: Urease accessory protein UreG (223 aa).

Residues 1-31 are disordered; sequence MAKHSHDHTHDHHDRPRRVRKPGEPLRIGVG. Residue 32–39 coordinates GTP; sequence GPVGSGKT.

The protein belongs to the SIMIBI class G3E GTPase family. UreG subfamily. Homodimer. UreD, UreF and UreG form a complex that acts as a GTP-hydrolysis-dependent molecular chaperone, activating the urease apoprotein by helping to assemble the nickel containing metallocenter of UreC. The UreE protein probably delivers the nickel.

It localises to the cytoplasm. Functionally, facilitates the functional incorporation of the urease nickel metallocenter. This process requires GTP hydrolysis, probably effectuated by UreG. This chain is Urease accessory protein UreG, found in Mycobacterium marinum (strain ATCC BAA-535 / M).